The chain runs to 601 residues: MRLSQMLLVTLRDDPAEAEIPSHKLLIRAGYIRRIGNGIYAYLPLMLRVINKVSTIVREEMNATGAQECLLPQLQPAELWQESGRWDTYTQAEGIMFSLIDRQNRELGLGPTHEEVITTIAKDIIRSYRQLPIHLYQLQTKFRDEIRPRFGLMRGREFIMKDGYSFHADEESLKKTYQDMDKAYRNMLRRSGLQFRAVDADSGAIGGSASQEFMVLADAGEDEILYTQDGKYAANMEKAISLPVDVEASPFDTYDKLETPGTETIEKMCEFLHCSATNIVKNVLYQAVYDNGISVLVLVSIRGDQDVNDVKLLNELTRLAGNYEAKTVLALSVPDVEAQKKWAAKSLPLGYIAPDLSDDYITSSKQVSPKFLRMVDKTAVYLTNFATGSNELGNHIVGANWGQEFALPKLVVDVRKAKKGDRAVHDPSKTLETARGIEVGHIFQLGTKYSEAMGATYTNEQGQEVPLLMGCYGVGVSRLAQAAVEQSYDKDGIIWPVAIAPYHVVICIPNIKDTQQIEVAGNLYKELNEAGIDTILDDRDERAGVKFKDADLIGIPYRIVTGRSLKSGKVELIERSTHQCQEIVVAQVLSTLKDLIEKALK.

The protein belongs to the class-II aminoacyl-tRNA synthetase family. ProS type 1 subfamily. As to quaternary structure, homodimer.

The protein resides in the cytoplasm. The catalysed reaction is tRNA(Pro) + L-proline + ATP = L-prolyl-tRNA(Pro) + AMP + diphosphate. Functionally, catalyzes the attachment of proline to tRNA(Pro) in a two-step reaction: proline is first activated by ATP to form Pro-AMP and then transferred to the acceptor end of tRNA(Pro). As ProRS can inadvertently accommodate and process non-cognate amino acids such as alanine and cysteine, to avoid such errors it has two additional distinct editing activities against alanine. One activity is designated as 'pretransfer' editing and involves the tRNA(Pro)-independent hydrolysis of activated Ala-AMP. The other activity is designated 'posttransfer' editing and involves deacylation of mischarged Ala-tRNA(Pro). The misacylated Cys-tRNA(Pro) is not edited by ProRS. The sequence is that of Proline--tRNA ligase from Trichodesmium erythraeum (strain IMS101).